The following is a 216-amino-acid chain: Putative ripening-related protein 4 (216 aa).

The N-terminal stretch at methionine 1–glycine 25 is a signal peptide.

The protein belongs to the kiwellin family.

It is found in the secreted. The polypeptide is Putative ripening-related protein 4 (Oryza sativa subsp. japonica (Rice)).